Reading from the N-terminus, the 262-residue chain is Outer membrane protein assembly factor BamD (262 aa).

The first 18 residues, 1–18, serve as a signal peptide directing secretion; it reads MRKIKSLALLAVAALVIG. A lipid anchor (N-palmitoyl cysteine) is attached at Cys19. Cys19 is lipidated: S-diacylglycerol cysteine.

Belongs to the BamD family. As to quaternary structure, part of the Bam complex.

It localises to the cell outer membrane. Its function is as follows. Part of the outer membrane protein assembly complex, which is involved in assembly and insertion of beta-barrel proteins into the outer membrane. The chain is Outer membrane protein assembly factor BamD from Haemophilus influenzae (strain ATCC 51907 / DSM 11121 / KW20 / Rd).